The sequence spans 198 residues: TM2 domain-containing protein 2 (198 aa).

Positions 1–27 (MRWPVPPVGYLLLGGQGLLLTFSLISS) are cleaved as a signal peptide. The Extracellular portion of the chain corresponds to 28–128 (QNQTSPVTYP…FLRGNKPCIK (101 aa)). 3 N-linked (GlcNAc...) asparagine glycosylation sites follow: N29, N40, and N76. The helical transmembrane segment at 129 to 149 (YTGHYFITTLLYSFFLGCFGV) threads the bilayer. Residues 131–179 (GHYFITTLLYSFFLGCFGVDRFCLGHTGTAVGKLLTLGGLGIWWFVDLI) form the TM2 domain. The Cytoplasmic segment spans residues 150 to 166 (DRFCLGHTGTAVGKLLT). The helical transmembrane segment at 167-187 (LGGLGIWWFVDLILLITGGLM) threads the bilayer. Over 188–198 (PSDNSNWCTIY) the chain is Extracellular.

Belongs to the TM2 family.

The protein resides in the membrane. This chain is TM2 domain-containing protein 2 (tm2d2), found in Xenopus tropicalis (Western clawed frog).